Consider the following 249-residue polypeptide: Proteasome activator complex subunit 1 (249 aa).

The tract at residues 60 to 102 (PLDIPVPDPVKEKEKEERKKQQEKEEKDEKKKGDEDDKGPPCG) is disordered. Basic and acidic residues predominate over residues 68–98 (PVKEKEKEERKKQQEKEEKDEKKKGDEDDKG).

Belongs to the PA28 family. Heterodimer of PSME1 and PSME2, which forms a hexameric ring. PSME1 can form homoheptamers.

Functionally, implicated in immunoproteasome assembly and required for efficient antigen processing. The PA28 activator complex enhances the generation of class I binding peptides by altering the cleavage pattern of the proteasome. The protein is Proteasome activator complex subunit 1 (Psme1) of Rattus norvegicus (Rat).